Consider the following 235-residue polypeptide: MIDTLPAFWAVIPAAGVGARMAADRPKQYLELAGQTLLEHSLDCFLGHPALKGVVVSIAEDDPYWPGLRYASDPRIQCAAGGRERADSVLNALLVLHAQGAGDSDWVLVHDAARPNLARSDLDKLLSELADDPVGGLLAVPARDTLKRADSHGRVSATVDRSTIWQAYTPQMFRLGALHRALAECLVSDVVVTDEASAIEWSGQAPRLVEGRSDNIKVTRPEDLEWLRQRWAGKR.

This sequence belongs to the IspD/TarI cytidylyltransferase family. IspD subfamily.

It catalyses the reaction 2-C-methyl-D-erythritol 4-phosphate + CTP + H(+) = 4-CDP-2-C-methyl-D-erythritol + diphosphate. It participates in isoprenoid biosynthesis; isopentenyl diphosphate biosynthesis via DXP pathway; isopentenyl diphosphate from 1-deoxy-D-xylulose 5-phosphate: step 2/6. Its function is as follows. Catalyzes the formation of 4-diphosphocytidyl-2-C-methyl-D-erythritol from CTP and 2-C-methyl-D-erythritol 4-phosphate (MEP). The polypeptide is 2-C-methyl-D-erythritol 4-phosphate cytidylyltransferase (Pseudomonas putida (strain ATCC 700007 / DSM 6899 / JCM 31910 / BCRC 17059 / LMG 24140 / F1)).